The chain runs to 91 residues: Small ribosomal subunit protein uS19 (91 aa).

This sequence belongs to the universal ribosomal protein uS19 family.

In terms of biological role, protein S19 forms a complex with S13 that binds strongly to the 16S ribosomal RNA. The polypeptide is Small ribosomal subunit protein uS19 (Pseudomonas syringae pv. tomato (strain ATCC BAA-871 / DC3000)).